The sequence spans 214 residues: Putative ras-related protein Rab-5B (214 aa).

Position 56–63 (56–63 (GEMNTGKT)) interacts with GTP. Residues 77–85 (TDSTIGAAF) carry the Effector region motif. GTP is bound by residues 103–107 (DTAGQ) and 161–164 (NKVD).

The protein belongs to the small GTPase superfamily. Rab family. In terms of processing, this sequence lacks the C-terminal cysteine motifs subject to isoprenylation in other Rab proteins.

The sequence is that of Putative ras-related protein Rab-5B (rab5B) from Dictyostelium discoideum (Social amoeba).